Consider the following 474-residue polypeptide: Gamma-aminobutyric acid receptor subunit gamma-2 (474 aa).

The N-terminal stretch at 1-38 is a signal peptide; that stretch reads MSSPNTWSIGSSVYSPVFSQKMTLWILLLLSLYPGFTS. Residues 39–274 are Extracellular-facing; the sequence is QKSDDDYEDY…FDLSRRMGYF (236 aa). Residues Asn51 and Asn128 are each glycosylated (N-linked (GlcNAc...) asparagine). A disulfide bridge links Cys189 with Cys203. N-linked (GlcNAc...) asparagine glycosylation is present at Asn246. A helical membrane pass occupies residues 275 to 295; sequence TIQTYIPCTLIVVLSWVSFWI. Over 296–301 the chain is Cytoplasmic; that stretch reads NKDAVP. The chain crosses the membrane as a helical span at residues 302 to 321; that stretch reads ARTSLGITTVLTMTTLSTIA. The Extracellular portion of the chain corresponds to 322–333; it reads RKSLPKVSYVTA. Residues 334-358 form a helical membrane-spanning segment; sequence MDLFVSVCFIFVFSALVEYGTLHYF. Over 359–450 the chain is Cytoplasmic; that stretch reads VSNRKPSKDK…IHIRIAKMDS (92 aa). Residue Ser381 is modified to Phosphoserine; by PKC. A helical transmembrane segment spans residues 451–472; sequence YARIFFPTAFCLFNLVYWVSYL. Residues 473-474 lie on the Extracellular side of the membrane; sequence YL.

It belongs to the ligand-gated ion channel (TC 1.A.9) family. Gamma-aminobutyric acid receptor (TC 1.A.9.5) subfamily. GABRG2 sub-subfamily. As to quaternary structure, heteropentamer, formed by a combination of alpha (GABRA1-6), beta (GABRB1-3), gamma (GABRG1-3), delta (GABRD), epsilon (GABRE), rho (GABRR1-3), pi (GABRP) and theta (GABRQ) chains, each subunit exhibiting distinct physiological and pharmacological properties. Interacts with GABARAP. Interacts with KIF21B. Identified in a complex of 720 kDa composed of LHFPL4, NLGN2, GABRA1, GABRB2, GABRG2 and GABRB3. Interacts with LHFPL4. Interacts with SHISA7; interaction leads to the regulation of GABA(A) receptor trafficking, channel deactivation kinetics and pharmacology. Glycosylated. In terms of processing, palmitoylated by ZDHHC3/GODZ; required for the accumulation of GABA(A) receptors at the postsynaptic membrane of inhibitory GABAergic synapses. As to expression, expressed in brain neurons (at protein level).

It is found in the postsynaptic cell membrane. The protein resides in the cell membrane. The protein localises to the cell projection. It localises to the dendrite. Its subcellular location is the cytoplasmic vesicle membrane. The enzyme catalyses chloride(in) = chloride(out). Allosterically activated by benzodiazepines. Activated by pentobarbital. Inhibited by the antagonist bicuculline. Inhibited by zinc ions. Potentiated by histamine. Gamma subunit of the heteropentameric ligand-gated chloride channel gated by gamma-aminobutyric acid (GABA), a major inhibitory neurotransmitter in the brain. GABA-gated chloride channels, also named GABA(A) receptors (GABAAR), consist of five subunits arranged around a central pore and contain GABA active binding site(s) located at the alpha and beta subunit interface(s). When activated by GABA, GABAARs selectively allow the flow of chloride anions across the cell membrane down their electrochemical gradient. Gamma-2/GABRG2-containing GABAARs are found at both synaptic and extrasynaptic sites. Chloride influx into the postsynaptic neuron following GABAAR opening decreases the neuron ability to generate a new action potential, thereby reducing nerve transmission. GABAARs containing alpha-1 and beta-2 or -3 subunits exhibit synaptogenic activity; the gamma-2 subunit being necessary but not sufficient to induce rapid synaptic contacts formation. Extrasynaptic gamma-2-containing receptors contribute to the tonic GABAergic inhibition. GABAARs function also as histamine receptor where histamine binds at the interface of two neighboring beta subunits and potentiates GABA response in a gamma-2 subunit-controlled manner. This Mus musculus (Mouse) protein is Gamma-aminobutyric acid receptor subunit gamma-2.